An 804-amino-acid chain; its full sequence is Leucine--tRNA ligase (804 aa).

The 'HIGH' region signature appears at 39–50 (PYPSGAGLHVGH). The short motif at 580-584 (KMSKS) is the 'KMSKS' region element. Lys-583 is an ATP binding site.

Belongs to the class-I aminoacyl-tRNA synthetase family.

Its subcellular location is the cytoplasm. The catalysed reaction is tRNA(Leu) + L-leucine + ATP = L-leucyl-tRNA(Leu) + AMP + diphosphate. The chain is Leucine--tRNA ligase from Mycoplasma mycoides subsp. mycoides SC (strain CCUG 32753 / NCTC 10114 / PG1).